The chain runs to 183 residues: Ribulose bisphosphate carboxylase small subunit, chloroplastic 4 (183 aa).

The N-terminal 57 residues, 1–57, are a transit peptide targeting the chloroplast; that stretch reads MASSLMSNAATTMAAATTTAQANMVAPFNGLKSISAFPVTRKNNDITSVASNGGRVQ.

Belongs to the RuBisCO small chain family. In terms of assembly, heterohexadecamer of 8 large and 8 small subunits.

It localises to the plastid. The protein localises to the chloroplast. Its function is as follows. RuBisCO catalyzes two reactions: the carboxylation of D-ribulose 1,5-bisphosphate, the primary event in carbon dioxide fixation, as well as the oxidative fragmentation of the pentose substrate. Both reactions occur simultaneously and in competition at the same active site. Although the small subunit is not catalytic it is essential for maximal activity. The sequence is that of Ribulose bisphosphate carboxylase small subunit, chloroplastic 4 from Mesembryanthemum crystallinum (Common ice plant).